The following is a 483-amino-acid chain: Altronate oxidoreductase (483 aa).

18-29 is an NAD(+) binding site; sequence IIQFGEGNFLRA.

It belongs to the mannitol dehydrogenase family. UxaB subfamily.

It catalyses the reaction D-altronate + NAD(+) = keto-D-tagaturonate + NADH + H(+). Its pathway is carbohydrate metabolism; pentose and glucuronate interconversion. This Yersinia pestis protein is Altronate oxidoreductase.